The chain runs to 515 residues: 2-isopropylmalate synthase (515 aa).

Residues 5-268 enclose the Pyruvate carboxyltransferase domain; it reads LIIFDTTLRD…DLGIDTTQIV (264 aa). Mn(2+) contacts are provided by Asp-14, His-202, His-204, and Asn-239. Residues 396-515 form a regulatory domain region; it reads KFVSLAQRSE…NADKLNPQRA (120 aa).

It belongs to the alpha-IPM synthase/homocitrate synthase family. LeuA type 1 subfamily. As to quaternary structure, homodimer. The cofactor is Mn(2+).

It is found in the cytoplasm. It catalyses the reaction 3-methyl-2-oxobutanoate + acetyl-CoA + H2O = (2S)-2-isopropylmalate + CoA + H(+). It functions in the pathway amino-acid biosynthesis; L-leucine biosynthesis; L-leucine from 3-methyl-2-oxobutanoate: step 1/4. In terms of biological role, catalyzes the condensation of the acetyl group of acetyl-CoA with 3-methyl-2-oxobutanoate (2-ketoisovalerate) to form 3-carboxy-3-hydroxy-4-methylpentanoate (2-isopropylmalate). The polypeptide is 2-isopropylmalate synthase (Burkholderia pseudomallei (strain 1106a)).